We begin with the raw amino-acid sequence, 242 residues long: Small ribosomal subunit protein uS7m (242 aa).

A mitochondrion-targeting transit peptide spans 1–37 (MAAPALRAPLRWSGLALGVRCAVWNLPGLTQVRGSRY). Lys228 is modified (N6-acetyllysine).

It belongs to the universal ribosomal protein uS7 family. Component of the mitochondrial ribosome small subunit (28S) which comprises a 12S rRNA and about 30 distinct proteins.

It localises to the mitochondrion. The chain is Small ribosomal subunit protein uS7m (Mrps7) from Mus musculus (Mouse).